We begin with the raw amino-acid sequence, 328 residues long: Tetraacyldisaccharide 4'-kinase (328 aa).

55 to 62 (TAGGNGKT) is a binding site for ATP.

It belongs to the LpxK family.

The catalysed reaction is a lipid A disaccharide + ATP = a lipid IVA + ADP + H(+). It participates in glycolipid biosynthesis; lipid IV(A) biosynthesis; lipid IV(A) from (3R)-3-hydroxytetradecanoyl-[acyl-carrier-protein] and UDP-N-acetyl-alpha-D-glucosamine: step 6/6. In terms of biological role, transfers the gamma-phosphate of ATP to the 4'-position of a tetraacyldisaccharide 1-phosphate intermediate (termed DS-1-P) to form tetraacyldisaccharide 1,4'-bis-phosphate (lipid IVA). The polypeptide is Tetraacyldisaccharide 4'-kinase (Escherichia coli O127:H6 (strain E2348/69 / EPEC)).